Reading from the N-terminus, the 620-residue chain is Chaperone protein HscA homolog (620 aa).

It belongs to the heat shock protein 70 family.

Functionally, chaperone involved in the maturation of iron-sulfur cluster-containing proteins. Has a low intrinsic ATPase activity which is markedly stimulated by HscB. The chain is Chaperone protein HscA homolog from Herminiimonas arsenicoxydans.